Reading from the N-terminus, the 367-residue chain is 4-hydroxy-3-methylbut-2-en-1-yl diphosphate synthase (flavodoxin) (367 aa).

Residues Cys265, Cys268, Cys300, and Glu307 each contribute to the [4Fe-4S] cluster site.

It belongs to the IspG family. Requires [4Fe-4S] cluster as cofactor.

The catalysed reaction is (2E)-4-hydroxy-3-methylbut-2-enyl diphosphate + oxidized [flavodoxin] + H2O + 2 H(+) = 2-C-methyl-D-erythritol 2,4-cyclic diphosphate + reduced [flavodoxin]. It functions in the pathway isoprenoid biosynthesis; isopentenyl diphosphate biosynthesis via DXP pathway; isopentenyl diphosphate from 1-deoxy-D-xylulose 5-phosphate: step 5/6. In terms of biological role, converts 2C-methyl-D-erythritol 2,4-cyclodiphosphate (ME-2,4cPP) into 1-hydroxy-2-methyl-2-(E)-butenyl 4-diphosphate. The polypeptide is 4-hydroxy-3-methylbut-2-en-1-yl diphosphate synthase (flavodoxin) (Bacillus anthracis).